The primary structure comprises 293 residues: Glycine--tRNA ligase alpha subunit (293 aa).

The protein belongs to the class-II aminoacyl-tRNA synthetase family. As to quaternary structure, tetramer of two alpha and two beta subunits.

It is found in the cytoplasm. The catalysed reaction is tRNA(Gly) + glycine + ATP = glycyl-tRNA(Gly) + AMP + diphosphate. The chain is Glycine--tRNA ligase alpha subunit from Wolinella succinogenes (strain ATCC 29543 / DSM 1740 / CCUG 13145 / JCM 31913 / LMG 7466 / NCTC 11488 / FDC 602W) (Vibrio succinogenes).